Here is a 92-residue protein sequence, read N- to C-terminus: Small ribosomal subunit protein bS20 (92 aa).

2 disordered regions span residues 1-25 (MALR…NRAK) and 68-92 (HKNA…AQQA). The segment covering 80–92 (AKAINKAKAAQQA) has biased composition (low complexity).

The protein belongs to the bacterial ribosomal protein bS20 family.

Binds directly to 16S ribosomal RNA. This Deinococcus radiodurans (strain ATCC 13939 / DSM 20539 / JCM 16871 / CCUG 27074 / LMG 4051 / NBRC 15346 / NCIMB 9279 / VKM B-1422 / R1) protein is Small ribosomal subunit protein bS20.